The sequence spans 807 residues: Glycerol-3-phosphate acyltransferase (807 aa).

The HXXXXD motif signature appears at 309–314; that stretch reads CHRSHM.

This sequence belongs to the GPAT/DAPAT family.

It is found in the cell inner membrane. The catalysed reaction is sn-glycerol 3-phosphate + an acyl-CoA = a 1-acyl-sn-glycero-3-phosphate + CoA. Its pathway is phospholipid metabolism; CDP-diacylglycerol biosynthesis; CDP-diacylglycerol from sn-glycerol 3-phosphate: step 1/3. The chain is Glycerol-3-phosphate acyltransferase from Aeromonas hydrophila subsp. hydrophila (strain ATCC 7966 / DSM 30187 / BCRC 13018 / CCUG 14551 / JCM 1027 / KCTC 2358 / NCIMB 9240 / NCTC 8049).